Reading from the N-terminus, the 222-residue chain is Urease accessory protein UreF (222 aa).

The protein belongs to the UreF family. UreD, UreF and UreG form a complex that acts as a GTP-hydrolysis-dependent molecular chaperone, activating the urease apoprotein by helping to assemble the nickel containing metallocenter of UreC. The UreE protein probably delivers the nickel.

It is found in the cytoplasm. Its function is as follows. Required for maturation of urease via the functional incorporation of the urease nickel metallocenter. This is Urease accessory protein UreF from Roseobacter denitrificans (strain ATCC 33942 / OCh 114) (Erythrobacter sp. (strain OCh 114)).